Here is a 1749-residue protein sequence, read N- to C-terminus: Kinase non-catalytic C-lobe domain-containing protein 1 (1749 aa).

A KIND 1 domain is found at 37-217 (VSLADILSLR…QDVSESSWRE (181 aa)). Disordered stretches follow at residues 210 to 275 (VSES…SHSR) and 361 to 435 (CRLW…ARQL). Basic and acidic residues-rich tracts occupy residues 363-373 (LWPEQEPEHQL) and 410-430 (ADPR…RIPE). The KIND 2 domain maps to 444–608 (VSLQDLLSQL…RASICQVYQE (165 aa)). Disordered regions lie at residues 689-871 (ARDQ…RPAD) and 962-1061 (QASP…GGAS). The span at 702 to 717 (ERGGQREGEGEEKLSL) shows a compositional bias: basic and acidic residues. Composition is skewed to low complexity over residues 739–748 (QGAAPEPLGA) and 766–779 (PANQ…AAPG). Residues 823–833 (HGPRHPPKPPR) show a composition bias toward basic residues. The segment covering 853-871 (GERDDQSPDSVPERPRPAD) has biased composition (basic and acidic residues). Ser964 carries the phosphoserine modification. Residues 980–990 (SQSPRSPSSKR) show a composition bias toward low complexity. Positions 1005 to 1019 (RTSSRAPCSPTSVSD) are enriched in polar residues. A compositionally biased stretch (basic and acidic residues) spans 1040-1056 (VKAERAQQPEAGEDRRP). Residues 1133-1190 (QQLMMEKRNYRKTLKFYQKLLQKEKRNKGSDVKTMLSKLKGQLEEMKSRVQFLSLVKK) are a coiled coil. One can recognise an N-terminal Ras-GEF domain in the interval 1246–1371 (KARILQAGTP…HLLGLLEVGM (126 aa)). Positions 1468–1719 (STHQLFSQLT…SGADISTLAA (252 aa)) constitute a Ras-GEF domain.

Interacts (via KIND2) with MAP2; the interaction enhances MAP2 phosphorylation and localizes KNDC1 to dendrites. In terms of tissue distribution, expressed specifically in the cerebral cortex.

It is found in the cell projection. It localises to the dendrite. The protein localises to the perikaryon. RAS-Guanine nucleotide exchange factor (GEF) that controls the negative regulation of neuronal dendrite growth by mediating a signaling pathway linking RAS and MAP2. May be involved in cellular senescence. This is Kinase non-catalytic C-lobe domain-containing protein 1 from Homo sapiens (Human).